A 670-amino-acid polypeptide reads, in one-letter code: Transcription factor 4 (670 aa).

Residues 1–83 form an essential for MYOD1 inhibition region; that stretch reads MHHQQRMAAL…GTPYDHMTSR (83 aa). Disordered stretches follow at residues 24-244, 262-320, 335-378, 406-426, 465-573, and 637-670; these read AMFS…LGNS, LSYP…SQTG, HTNN…EGPL, PSTA…PSHN, SLLP…MANN, and KRRE…MGQM. Positions 29–49 are enriched in polar residues; the sequence is PVSSGKNGPTSLASGHFTGSN. 3 positions are modified to phosphoserine: serine 66, serine 87, and serine 92. Polar residues-rich tracts occupy residues 107–125, 136–154, 205–215, and 265–305; these read GSYS…QQSL, GTLS…SSNN, PAASTFPSSFF, and PSHS…TDSI. The segment covering 336–347 has biased composition (low complexity); sequence TNNSFSSNPSTP. The segment covering 364 to 373 has biased composition (polar residues); it reads NGGQASSSPN. Serine 371 is subject to Phosphoserine. Positions 378 to 399 are leucine-zipper; sequence LHSLQSRIEDRLERLDDAIHVL. 2 stretches are compositionally biased toward low complexity: residues 466-479 and 502-511; these read LLPN…LPVQ and GQSVSSGSSE. Position 514 is a phosphoserine (serine 514). 2 stretches are compositionally biased toward basic and acidic residues: residues 526-542 and 558-573; these read KSSE…DIKS and PEQK…MANN. The bHLH domain occupies 567 to 620; the sequence is ERRMANNARERLRVRDINEAFKELGRMVQLHLKSDKPQTKLLILHQAVAVILSL. Positions 622–645 are class A specific domain; it reads QQVRERNLNPKAACLKRREEEKVS.

As to quaternary structure, efficient DNA binding requires dimerization with another bHLH protein. Isoform 2 seems to form inactive heterodimers with MYOD1. Interacts with HIVEP2. Interacts with NEUROD2. Interacts with AGBL1. Interacts with BHLHA9. In terms of tissue distribution, expressed in the cerebral cortex, Purkinje and granule cell layers of the cerebellum, olfactory neuroepithelium, pyramidal cells of hippocampal layers CA1-CA4, and in the granular cells of the dentate gyrus.

Its subcellular location is the nucleus. Transcription factor that binds to the immunoglobulin enhancer Mu-E5/KE5-motif. Involved in the initiation of neuronal differentiation. Activates transcription by binding to the E box (5'-CANNTG-3'). Isoform 2 inhibits MYOD1 activation of the cardiac alpha-actin promoter. Binds to the E-box present in the somatostatin receptor 2 initiator element (SSTR2-INR) to activate transcription. May have a regulatory function in developmental processes as well as during neuronal plasticity. This Mus musculus (Mouse) protein is Transcription factor 4 (Tcf4).